The following is a 1423-amino-acid chain: ABC transporter G family member 40 (1423 aa).

A compositionally biased stretch (polar residues) spans Met1–Val19. The interval Met1–Glu36 is disordered. N-linked (GlcNAc...) asparagine glycosylation occurs at Asn16. Positions Trp20–Arg34 are enriched in basic and acidic residues. Residues Leu154 to Pro427 form the ABC transporter 1 domain. Gly187–Thr194 is a binding site for ATP. Asn376 carries an N-linked (GlcNAc...) asparagine glycan. The region spanning Glu505 to Phe718 is the ABC transmembrane type-2 1 domain. The next 6 helical transmembrane spans lie at Phe523–Phe543, Ala562–Ile582, Ile611–Phe631, Ile643–Gly663, Ile667–Val687, and Trp696–Asn716. Asn729 is a glycosylation site (N-linked (GlcNAc...) asparagine). Residues Gly756–Leu776 traverse the membrane as a helical segment. One can recognise an ABC transporter 2 domain in the interval Ile825 to Gln1077. Gly870 to Thr877 is an ATP binding site. Asn895 is a glycosylation site (N-linked (GlcNAc...) asparagine). Thr962 bears the Phosphothreonine mark. Residues Thr1150–Phe1364 form the ABC transmembrane type-2 2 domain. The next 6 helical transmembrane spans lie at Phe1174 to Lys1194, Ser1207 to Val1227, Ile1257 to Phe1277, Phe1284 to Met1304, Ile1314 to Ile1334, and Val1341 to Ala1361. Residue Asn1375 is glycosylated (N-linked (GlcNAc...) asparagine). Residues Val1395 to Ile1415 traverse the membrane as a helical segment.

It belongs to the ABC transporter superfamily. ABCG family. PDR (TC 3.A.1.205) subfamily. Interacts with LECRK91 and LECRK92. In terms of tissue distribution, mostly observed in inflorescence meristems relative to cauline leaves and developing siliques. Ubiquitous with higher levels in leaves, stems and flowers. Also present in primary and lateral roots. In seeds, mainly expressed in the embryo and, to a lesser extent, in the endosperm.

It localises to the cell membrane. It catalyses the reaction abscisate(out) + ATP + H2O = abscisate(in) + ADP + phosphate + H(+). Its activity is regulated as follows. Inhibited by glibenclamide, verapamil and vanadate (ABC transporters inhibitors). High affinity abscisic acid (ABA) transporter that mediates the import of ABA, with a preference for (+)-ABA, through the plasma membrane, especially in guard cells, and is involved in the intercellular and intracellular ABA signaling pathways leading, for example, to stomatal closure, thus conferring drought tolerance. Together with ABCG30, import into the embryo the ABA delivered from the endosperm via ABCG25 and ABCG31-mediated export to suppress radicle extension and subsequent embryonic growth. May be a general defense protein. Functions as a pump to exclude Pb(2+) ions and/or Pb(2+)-containing toxic compounds from the cytoplasm. Contributes to Pb(2+) ions resistance. Confers some resistance to the terpene sclareol. In terms of biological role, (Microbial infection) Involved in resistance response to the pathogenic oomycetes Phytophthora infestans and Phytophthora capsici. This is ABC transporter G family member 40 from Arabidopsis thaliana (Mouse-ear cress).